Reading from the N-terminus, the 196-residue chain is DnaA initiator-associating protein DiaA (196 aa).

Residues 34-196 (LVQSLLNGNK…DNTLFPHQDD (163 aa)) form the SIS domain.

It belongs to the SIS family. DiaA subfamily. In terms of assembly, homotetramer; dimer of dimers.

In terms of biological role, required for the timely initiation of chromosomal replication via direct interactions with the DnaA initiator protein. The sequence is that of DnaA initiator-associating protein DiaA from Shigella boydii serotype 18 (strain CDC 3083-94 / BS512).